Here is a 114-residue protein sequence, read N- to C-terminus: UPF0102 protein jhp_0762 (114 aa).

This sequence belongs to the UPF0102 family.

In Helicobacter pylori (strain J99 / ATCC 700824) (Campylobacter pylori J99), this protein is UPF0102 protein jhp_0762.